Here is a 232-residue protein sequence, read N- to C-terminus: 2-C-methyl-D-erythritol 4-phosphate cytidylyltransferase (232 aa).

The protein belongs to the IspD/TarI cytidylyltransferase family. IspD subfamily.

The catalysed reaction is 2-C-methyl-D-erythritol 4-phosphate + CTP + H(+) = 4-CDP-2-C-methyl-D-erythritol + diphosphate. The protein operates within isoprenoid biosynthesis; isopentenyl diphosphate biosynthesis via DXP pathway; isopentenyl diphosphate from 1-deoxy-D-xylulose 5-phosphate: step 2/6. In terms of biological role, catalyzes the formation of 4-diphosphocytidyl-2-C-methyl-D-erythritol from CTP and 2-C-methyl-D-erythritol 4-phosphate (MEP). The protein is 2-C-methyl-D-erythritol 4-phosphate cytidylyltransferase of Neorickettsia sennetsu (strain ATCC VR-367 / Miyayama) (Ehrlichia sennetsu).